Reading from the N-terminus, the 221-residue chain is uncharacterized protein (221 aa).

One can recognise a Peptidase S8 domain in the interval 1-189 (MDSGKDTNGY…NVVYCSEKAV (189 aa)).

It belongs to the peptidase S8 family.

This is an uncharacterized protein from Aquifex aeolicus (strain VF5).